The chain runs to 736 residues: Alpha-xylosidase A (736 aa).

The signal sequence occupies residues 1 to 18 (MYFSSFLALGALVQAAAA). N-linked (GlcNAc...) asparagine glycosylation is found at asparagine 24, asparagine 279, asparagine 332, and asparagine 376. The active site involves aspartate 413. Asparagine 471 carries N-linked (GlcNAc...) asparagine glycosylation. The active-site Proton donor is the aspartate 505. Asparagine 655, asparagine 676, asparagine 690, and asparagine 701 each carry an N-linked (GlcNAc...) asparagine glycan.

The protein belongs to the glycosyl hydrolase 31 family.

Its subcellular location is the secreted. The enzyme catalyses Hydrolysis of terminal, non-reducing alpha-D-xylose residues with release of alpha-D-xylose.. Functionally, catalyzes the liberation of alpha-xylose from the non-reducing terminal glucose of xyloglucan oligosaccharides. This chain is Alpha-xylosidase A, found in Aspergillus niger (strain ATCC MYA-4892 / CBS 513.88 / FGSC A1513).